The following is a 521-amino-acid chain: Cytochrome P450 monooxygenase sdnF (521 aa).

Residues 19–39 (YLGLLLSGTVLYTVYKLIIAI) traverse the membrane as a helical segment. N-linked (GlcNAc...) asparagine glycosylation is found at Asn-178, Asn-186, Asn-191, Asn-309, and Asn-416. Residue Cys-460 participates in heme binding.

Belongs to the cytochrome P450 family. Heme is required as a cofactor.

The protein resides in the membrane. It functions in the pathway antibiotic biosynthesis. Functionally, cytochrome P450 monooxygenase; part of the gene cluster that mediates the biosynthesis of sordarin and hypoxysordarin, glycoside antibiotics with a unique tetracyclic diterpene aglycone structure. First, the geranylgeranyl diphosphate synthase sdnC constructs GGDP from farnesyl diphosphate and isopentenyl diphosphate. The diterpene cyclase sdnA then catalyzes the cyclization of GGDP to afford cycloaraneosene. Cycloaraneosene is then hydroxylated four times by the putative cytochrome P450 monooxygenases sdnB, sdnE, sdnF and sdnH to give a hydroxylated cycloaraneosene derivative such as cycloaraneosene-8,9,13,19-tetraol. Although the order of the hydroxylations is unclear, at least C8, C9 and C13 of the cycloaraneosene skeleton are hydroxylated before the sordaricin formation. Dehydration of the 13-hydroxy group of the hydroxylated cycloaraneosene derivative might be catalyzed by an unassigned hypothetical protein such as sdnG and sdnP to construct the cyclopentadiene moiety. The FAD-dependent oxidoreductase sdnN is proposed to catalyze the oxidation at C9 of the hydroxylated cycloaraneosene derivative and also catalyze the Baeyer-Villiger oxidation to give the lactone intermediate. The presumed lactone intermediate would be hydrolyzed to give an acrolein moiety and a carboxylate moiety. Then, [4+2]cycloaddition would occur between the acrolein moiety and the cyclopentadiene moiety to give sordaricin. SdnN might also be involved in the [4+2]cycloaddition after the hypothesized oxidation to accommodate the oxidized product and prompt the [4+2]cycloaddition. GDP-6-deoxy-D-altrose may be biosynthesized from GDP-D-mannose by the putative GDP-mannose-4,6-dehydratase sdnI and the short-chain dehydrogenase sdnK. The glycosyltransferase sdnJ catalyzes the attachment of 6-deoxy-D-altrose onto the 19-hydroxy group of sordaricin to give 4'-O-demethylsordarin. The methyltransferase sdnD would complete the biosynthesis of sordarin. Sordarin can be further modified into hypoxysordarin. The unique acyl chain at the 3'-hydroxy group of hypoxysordarin would be constructed by an iterative type I PKS sdnO and the trans-acting polyketide methyltransferase sdnL. SdnL would be responsible for the introduction of an alpha-methyl group of the polyketide chain. Alternatively, the beta-lactamase-like protein sdnR might be responsible for the cleavage and transfer of the polyketide chain from the PKS sdnO to sordarin. Two putative cytochrome P450 monooxygenases, sdnQ and sdnT, might catalyze the epoxidations of the polyketide chain to complete the biosynthesis of hypoxysordarin. Transcriptional regulators sdnM and sdnS are presumably encoded for the transcriptional regulation of the expression of the sdn gene cluster. This chain is Cytochrome P450 monooxygenase sdnF, found in Sordaria araneosa (Pleurage araneosa).